A 283-amino-acid chain; its full sequence is MLIIETLPLLRQQIRRLRMEGKRVALVPTMGNLHDGHMKLVDEAKARADVVVVSIFVNPMQFDRPEDLARYPRTLQEDCEKLNKRKVDLVFAPSVKEIYPNGTETHTYVDVPGLSTMLEGASRPGHFRGVSTIVSKLFNLVQPDIACFGEKDFQQLALIRKMVADMGFDIEIVGVPIMRAKDGLALSSRNGYLTAEQRKIAPGLYKVLSSIADKLQVGERDLDEIITIAGQELNEKGFRADDIQIRDADTLLEVSETSKRAVILVAAWLGDARLIDNKMVELA.

ATP is bound at residue 30-37 (MGNLHDGH). Histidine 37 functions as the Proton donor in the catalytic mechanism. Glutamine 61 is a binding site for (R)-pantoate. Glutamine 61 lines the beta-alanine pocket. 149–152 (GEKD) provides a ligand contact to ATP. Glutamine 155 is a binding site for (R)-pantoate. 186–189 (LSSR) is an ATP binding site.

It belongs to the pantothenate synthetase family. Homodimer.

The protein resides in the cytoplasm. It catalyses the reaction (R)-pantoate + beta-alanine + ATP = (R)-pantothenate + AMP + diphosphate + H(+). The protein operates within cofactor biosynthesis; (R)-pantothenate biosynthesis; (R)-pantothenate from (R)-pantoate and beta-alanine: step 1/1. Its function is as follows. Catalyzes the condensation of pantoate with beta-alanine in an ATP-dependent reaction via a pantoyl-adenylate intermediate. The polypeptide is Pantothenate synthetase (Escherichia coli (strain ATCC 8739 / DSM 1576 / NBRC 3972 / NCIMB 8545 / WDCM 00012 / Crooks)).